The sequence spans 604 residues: Elongation factor 4 (604 aa).

The 183-residue stretch at 9 to 191 (DAIRNFCIIA…AVISRVPAPA (183 aa)) folds into the tr-type G domain. Residues 21–26 (DHGKST) and 138–141 (NKID) each bind GTP.

This sequence belongs to the TRAFAC class translation factor GTPase superfamily. Classic translation factor GTPase family. LepA subfamily.

It is found in the cell inner membrane. It carries out the reaction GTP + H2O = GDP + phosphate + H(+). Its function is as follows. Required for accurate and efficient protein synthesis under certain stress conditions. May act as a fidelity factor of the translation reaction, by catalyzing a one-codon backward translocation of tRNAs on improperly translocated ribosomes. Back-translocation proceeds from a post-translocation (POST) complex to a pre-translocation (PRE) complex, thus giving elongation factor G a second chance to translocate the tRNAs correctly. Binds to ribosomes in a GTP-dependent manner. The polypeptide is Elongation factor 4 (Prosthecochloris aestuarii (strain DSM 271 / SK 413)).